The following is a 232-amino-acid chain: RNA chaperone ProQ (232 aa).

Positions 105 to 182 (EAKARVQAQR…REEQHTPVSD (78 aa)) are disordered. A compositionally biased stretch (basic and acidic residues) spans 117-136 (QQAKKREAAAAAGEKEDAPR). Residues 137 to 146 (RERKPRPTTP) are compositionally biased toward basic residues. The span at 147-177 (RRKEGAERKPRAQKPVEKAPKTVKAPREEQH) shows a compositional bias: basic and acidic residues.

Belongs to the ProQ family.

It localises to the cytoplasm. Its function is as follows. RNA chaperone with significant RNA binding, RNA strand exchange and RNA duplexing activities. May regulate ProP activity through an RNA-based, post-transcriptional mechanism. The chain is RNA chaperone ProQ from Shigella boydii serotype 18 (strain CDC 3083-94 / BS512).